The following is a 459-amino-acid chain: Cysteine--tRNA ligase (459 aa).

Position 29 (Cys-29) interacts with Zn(2+). Positions 31–41 (PTVYNLVHIGN) match the 'HIGH' region motif. 3 residues coordinate Zn(2+): Cys-209, His-234, and Glu-238. Positions 267 to 271 (KMSKS) match the 'KMSKS' region motif. An ATP-binding site is contributed by Lys-270.

It belongs to the class-I aminoacyl-tRNA synthetase family. As to quaternary structure, monomer. Requires Zn(2+) as cofactor.

The protein localises to the cytoplasm. The enzyme catalyses tRNA(Cys) + L-cysteine + ATP = L-cysteinyl-tRNA(Cys) + AMP + diphosphate. This is Cysteine--tRNA ligase from Saccharophagus degradans (strain 2-40 / ATCC 43961 / DSM 17024).